We begin with the raw amino-acid sequence, 777 residues long: Penicillin-binding protein 1B (777 aa).

The Cytoplasmic portion of the chain corresponds to 1–30 (MTRKSSNRSRGRKARSGKSASSSKLQIWLG). A helical; Signal-anchor for type II membrane protein transmembrane segment spans residues 31–52 (RIWSIGWKLALTLAAVLVFIGI). Over 53-777 (YLDSMIKQRF…TEWIKKLFEW (725 aa)) the chain is Periplasmic. The transglycosylase stretch occupies residues 162–334 (LRLEPKLMGM…SYYNPMRYAE (173 aa)). Residue E200 is the Proton donor; for transglycosylase activity of the active site. The transpeptidase stretch occupies residues 415–709 (SKLEQAIHDQ…ASGALRVYAQ (295 aa)). The Acyl-ester intermediate; for transpeptidase activity role is filled by S476.

In the N-terminal section; belongs to the glycosyltransferase 51 family. This sequence in the C-terminal section; belongs to the transpeptidase family.

It is found in the cell inner membrane. The enzyme catalyses [GlcNAc-(1-&gt;4)-Mur2Ac(oyl-L-Ala-gamma-D-Glu-L-Lys-D-Ala-D-Ala)](n)-di-trans,octa-cis-undecaprenyl diphosphate + beta-D-GlcNAc-(1-&gt;4)-Mur2Ac(oyl-L-Ala-gamma-D-Glu-L-Lys-D-Ala-D-Ala)-di-trans,octa-cis-undecaprenyl diphosphate = [GlcNAc-(1-&gt;4)-Mur2Ac(oyl-L-Ala-gamma-D-Glu-L-Lys-D-Ala-D-Ala)](n+1)-di-trans,octa-cis-undecaprenyl diphosphate + di-trans,octa-cis-undecaprenyl diphosphate + H(+). It carries out the reaction Preferential cleavage: (Ac)2-L-Lys-D-Ala-|-D-Ala. Also transpeptidation of peptidyl-alanyl moieties that are N-acyl substituents of D-alanine.. The protein operates within cell wall biogenesis; peptidoglycan biosynthesis. Its function is as follows. Cell wall formation. Synthesis of cross-linked peptidoglycan from the lipid intermediates. The enzyme has a penicillin-insensitive transglycosylase N-terminal domain (formation of linear glycan strands) and a penicillin-sensitive transpeptidase C-terminal domain (cross-linking of the peptide subunits). The sequence is that of Penicillin-binding protein 1B (mrcB) from Vibrio cholerae serotype O1 (strain ATCC 39315 / El Tor Inaba N16961).